Here is a 94-residue protein sequence, read N- to C-terminus: MGPPSGKTYMGWWGHMGGPKQKGITSYAVSPYAQKPLQGIFHNAVFNSFRRFKSQFLYVLIPAGIYWYWWKNGNEYNEFLYSKAGREELERVNV.

Residues 2 to 49 (GPPSGKTYMGWWGHMGGPKQKGITSYAVSPYAQKPLQGIFHNAVFNSF) lie on the Mitochondrial matrix side of the membrane. The chain crosses the membrane as a helical span at residues 50-80 (RRFKSQFLYVLIPAGIYWYWWKNGNEYNEFL). Topologically, residues 81 to 94 (YSKAGREELERVNV) are mitochondrial intermembrane.

The protein belongs to the UQCRQ/QCR8 family. As to quaternary structure, component of the ubiquinol-cytochrome c oxidoreductase (cytochrome b-c1 complex, complex III, CIII), a multisubunit enzyme composed of 10 subunits. The complex is composed of 3 respiratory subunits cytochrome b (COB), cytochrome c1 (CYT1) and Rieske protein (RIP1), 2 core protein subunits COR1 and QCR2, and 5 low-molecular weight protein subunits QCR6, QCR7, QCR8, QCR9 and QCR10. The complex exists as an obligatory dimer and forms supercomplexes (SCs) in the inner mitochondrial membrane with a monomer or a dimer of cytochrome c oxidase (complex IV, CIV), resulting in 2 different assemblies (supercomplexes III(2)IV and III(2)IV(2)).

The protein localises to the mitochondrion inner membrane. Component of the ubiquinol-cytochrome c oxidoreductase, a multisubunit transmembrane complex that is part of the mitochondrial electron transport chain which drives oxidative phosphorylation. The respiratory chain contains 3 multisubunit complexes succinate dehydrogenase (complex II, CII), ubiquinol-cytochrome c oxidoreductase (cytochrome b-c1 complex, complex III, CIII) and cytochrome c oxidase (complex IV, CIV), that cooperate to transfer electrons derived from NADH and succinate to molecular oxygen, creating an electrochemical gradient over the inner membrane that drives transmembrane transport and the ATP synthase. The cytochrome b-c1 complex catalyzes electron transfer from ubiquinol to cytochrome c, linking this redox reaction to translocation of protons across the mitochondrial inner membrane, with protons being carried across the membrane as hydrogens on the quinol. In the process called Q cycle, 2 protons are consumed from the matrix, 4 protons are released into the intermembrane space and 2 electrons are passed to cytochrome c. The polypeptide is Cytochrome b-c1 complex subunit 8, mitochondrial (QCR8) (Saccharomyces cerevisiae (strain ATCC 204508 / S288c) (Baker's yeast)).